The chain runs to 282 residues: UPF0761 membrane protein HAPS_1376 (282 aa).

A run of 6 helical transmembrane segments spans residues 32-52, 89-109, 124-144, 170-190, 202-222, and 234-254; these read LLSL…LPIF, MGII…SSID, VILS…FAGA, LLKF…YLIV, VGAL…IWYI, and ALAT…VVLL.

The protein belongs to the UPF0761 family.

Its subcellular location is the cell inner membrane. In Glaesserella parasuis serovar 5 (strain SH0165) (Haemophilus parasuis), this protein is UPF0761 membrane protein HAPS_1376.